A 147-amino-acid polypeptide reads, in one-letter code: D-aminoacyl-tRNA deacylase (147 aa).

The short motif at 137–138 (GP) is the Gly-cisPro motif, important for rejection of L-amino acids element.

The protein belongs to the DTD family. As to quaternary structure, homodimer.

The protein resides in the cytoplasm. The enzyme catalyses glycyl-tRNA(Ala) + H2O = tRNA(Ala) + glycine + H(+). The catalysed reaction is a D-aminoacyl-tRNA + H2O = a tRNA + a D-alpha-amino acid + H(+). Functionally, an aminoacyl-tRNA editing enzyme that deacylates mischarged D-aminoacyl-tRNAs. Also deacylates mischarged glycyl-tRNA(Ala), protecting cells against glycine mischarging by AlaRS. Acts via tRNA-based rather than protein-based catalysis; rejects L-amino acids rather than detecting D-amino acids in the active site. By recycling D-aminoacyl-tRNA to D-amino acids and free tRNA molecules, this enzyme counteracts the toxicity associated with the formation of D-aminoacyl-tRNA entities in vivo and helps enforce protein L-homochirality. The sequence is that of D-aminoacyl-tRNA deacylase from Bacillus velezensis (strain DSM 23117 / BGSC 10A6 / LMG 26770 / FZB42) (Bacillus amyloliquefaciens subsp. plantarum).